A 497-amino-acid chain; its full sequence is Meiosis-specific serine/threonine-protein kinase MEK1 (497 aa).

In terms of domain architecture, FHA spans 47-102 (VKVGRNDKECQLVLTNPSISSVHCVFWCVFFDEDSIPMFYVKDCSLNGTYLNGLLL). The region spanning 162-444 (EITNRIVGNG…SKQGLKHIWI (283 aa)) is the Protein kinase domain. Residues 168-176 (VGNGTFGHV) and K199 each bind ATP. The active-site Proton acceptor is the D290.

It belongs to the protein kinase superfamily. CAMK Ser/Thr protein kinase family. CHEK2 subfamily.

The catalysed reaction is L-seryl-[protein] + ATP = O-phospho-L-seryl-[protein] + ADP + H(+). The enzyme catalyses L-threonyl-[protein] + ATP = O-phospho-L-threonyl-[protein] + ADP + H(+). In terms of biological role, probable protein kinase required for meiotic recombination. The polypeptide is Meiosis-specific serine/threonine-protein kinase MEK1 (MEK1) (Saccharomyces cerevisiae (strain ATCC 204508 / S288c) (Baker's yeast)).